Reading from the N-terminus, the 294-residue chain is Proteasome subunit beta 1 (294 aa).

Positions 1–65 are cleaved as a propeptide — removed in mature form; by autocatalysis; that stretch reads MTADRPALRT…MESGDLAPHG (65 aa). The active-site Nucleophile is the Thr66.

Belongs to the peptidase T1B family. The 20S proteasome core is composed of 14 alpha and 14 beta subunits that assemble into four stacked heptameric rings, resulting in a barrel-shaped structure. The two inner rings, each composed of seven catalytic beta subunits, are sandwiched by two outer rings, each composed of seven alpha subunits. All four combinations of alpha- and beta-subunits (beta2-alpha1, beta2-alpha2, beta1-alpha2 and beta1-alpha1) yield fully assembled and proteolytically active proteasomes. The catalytic chamber with the active sites is on the inside of the barrel. Has probably a gated structure, the ends of the cylinder being occluded by the N-termini of the alpha-subunits. Is likely capped by the proteasome-associated ATPase, ARC.

The protein localises to the cytoplasm. It catalyses the reaction Cleavage of peptide bonds with very broad specificity.. Its pathway is protein degradation; proteasomal Pup-dependent pathway. The formation of the proteasomal ATPase ARC-20S proteasome complex, likely via the docking of the C-termini of ARC into the intersubunit pockets in the alpha-rings, may trigger opening of the gate for substrate entry. Interconversion between the open-gate and close-gate conformations leads to a dynamic regulation of the 20S proteasome proteolysis activity. Its function is as follows. Component of the proteasome core, a large protease complex with broad specificity involved in protein degradation. The R.erythropolis proteasomes are able to cleave oligopeptides after Tyr, Phe and Leu, very poorly after Arg but not after Glu. Thus, displays chymotrypsin-like activity, low trypsin-like activity but no caspase-like activity. The sequence is that of Proteasome subunit beta 1 from Rhodococcus erythropolis (Arthrobacter picolinophilus).